A 249-amino-acid chain; its full sequence is General transcription factor IIF subunit 2 (249 aa).

Ala2 carries the N-acetylalanine modification. Lys22, Lys33, and Lys137 each carry N6-acetyllysine. Position 142 is a phosphoserine (Ser142). The DNA site is built by Gly227 and His229. Ser248 is modified (phosphoserine).

It belongs to the TFIIF beta subunit family. As to quaternary structure, heterodimer of an alpha and a beta subunit. Interacts with HTATSF1 and GPBP1. Interacts with URI1. Interacts with GTF2B (via N-terminus); this interaction is inhibited in presence of GTF2F1. Part of TBP-based Pol II pre-initiation complex (PIC), in which Pol II core assembles with general transcription factors and other specific initiation factors including GTF2E1, GTF2E2, GTF2F1, GTF2F2, TCEA1, ERCC2, ERCC3, GTF2H2, GTF2H3, GTF2H4, GTF2H5, GTF2A1, GTF2A2, GTF2B and TBP; this large multi-subunit PIC complex mediates DNA unwinding and targets Pol II core to the transcription start site where the first phosphodiester bond forms.

The protein localises to the nucleus. Functionally, TFIIF is a general transcription initiation factor that binds to RNA polymerase II and helps to recruit it to the initiation complex in collaboration with TFIIB. The protein is General transcription factor IIF subunit 2 (GTF2F2) of Homo sapiens (Human).